The sequence spans 1382 residues: DNA-directed RNA polymerase subunit beta (1382 aa).

Belongs to the RNA polymerase beta chain family. In terms of assembly, the RNAP catalytic core consists of 2 alpha, 1 beta, 1 beta' and 1 omega subunit. When a sigma factor is associated with the core the holoenzyme is formed, which can initiate transcription.

It carries out the reaction RNA(n) + a ribonucleoside 5'-triphosphate = RNA(n+1) + diphosphate. Its function is as follows. DNA-dependent RNA polymerase catalyzes the transcription of DNA into RNA using the four ribonucleoside triphosphates as substrates. The polypeptide is DNA-directed RNA polymerase subunit beta (Paracoccus denitrificans (strain Pd 1222)).